Reading from the N-terminus, the 368-residue chain is Endophilin-A2 (368 aa).

Residues Met-1–Val-21 are membrane-binding amphipathic helix. The region spanning Ser-18–Ser-249 is the BAR domain. Residues Pro-60 to Pro-87 are required for dimerization upon membrane association. Residues Glu-181–Arg-250 are a coiled coil. An interaction with ARC region spans residues Leu-218–Glu-254. The interval Arg-243–Gln-308 is disordered. Positions Arg-245–Leu-263 are enriched in basic and acidic residues. Ser-288 and Ser-292 each carry phosphoserine. The residue at position 298 (Thr-298) is a Phosphothreonine. One can recognise an SH3 domain in the interval Leu-306–Pro-365. A Phosphotyrosine modification is found at Tyr-315.

This sequence belongs to the endophilin family. As to quaternary structure, interacts with ARC, SYNJ1 and DNM1. Interacts with PDCD6IP. Interacts with BIN2.

It is found in the cytoplasm. It localises to the early endosome membrane. Its subcellular location is the cell projection. The protein localises to the podosome. In terms of biological role, implicated in endocytosis. May recruit other proteins to membranes with high curvature. In Bos taurus (Bovine), this protein is Endophilin-A2.